A 594-amino-acid polypeptide reads, in one-letter code: Solute carrier family 22 member 14 (594 aa).

Residues 1–70 (MAGEENFKEE…EFGTFQQRLV (70 aa)) are Cytoplasmic-facing. Residues 71-91 (ALTFIPSIMSAFFMFADHFVF) form a helical membrane-spanning segment. At 92–184 (TAQKPYCNTS…LVCGMETKKD (93 aa)) the chain is on the extracellular side. Residues N99, N117, N125, and N150 are each glycosylated (N-linked (GlcNAc...) asparagine). Residues 185–205 (TAQIMFMAGLPIGSLIFRLIT) traverse the membrane as a helical segment. The Cytoplasmic segment spans residues 206–210 (DKMGR). A helical transmembrane segment spans residues 211–231 (YPAILLSLLGLIIFGFGTAFM). At 232–235 (NSFH) the chain is on the extracellular side. A helical membrane pass occupies residues 236-256 (LYLFFRFGISQSVVGYAISSI). At 257-270 (SLATEWLVGEHRAH) the chain is on the cytoplasmic side. A helical membrane pass occupies residues 271–291 (AIILGHCFFAVGAVLLTGIAY). Residues 292-297 (SLPHWQ) lie on the Extracellular side of the membrane. Residues 298–318 (LLFLVGGILVIPFISYIWILP) traverse the membrane as a helical segment. Over 319–379 (ESPRWLMMKG…DFCKNRQLCK (61 aa)) the chain is Cytoplasmic. Residues 380–400 (VTLVMSCVWFTVSYTYFTLSL) traverse the membrane as a helical segment. Topologically, residues 401-408 (RMRELGVS) are extracellular. A helical membrane pass occupies residues 409 to 431 (VHFRHVVPSIMEVPARLCCIFLL). The Cytoplasmic segment spans residues 432 to 437 (QQIGRK). The helical transmembrane segment at 438-458 (WSLAVTLLQAIIWCLLLLFLP) threads the bilayer. The Extracellular portion of the chain corresponds to 459–488 (EGEDGLRLKWPRCPATELKSMTILVLMLRE). Residues 489–509 (FSLAATVTVFFLYTAELLPTV) form a helical membrane-spanning segment. Topologically, residues 510 to 512 (LRA) are cytoplasmic. The chain crosses the membrane as a helical span at residues 513–533 (TGLGLVSLASVAGAILSLTII). The Extracellular segment spans residues 534-538 (SQTPS). Residues 539-559 (LLPIFLCCVLAIVAFSLSSLL) form a helical membrane-spanning segment. The Cytoplasmic segment spans residues 560–594 (PETRDQPLSESLNHSSQIRNKVKDMKTKETSSDDV). A disordered region spans residues 566–594 (PLSESLNHSSQIRNKVKDMKTKETSSDDV). The span at 567–578 (LSESLNHSSQIR) shows a compositional bias: polar residues. Basic and acidic residues predominate over residues 580–594 (KVKDMKTKETSSDDV).

This sequence belongs to the major facilitator (TC 2.A.1) superfamily. Organic cation transporter (TC 2.A.1.19) family. Ubiquitous.

The protein localises to the mitochondrion inner membrane. It is found in the cell projection. The protein resides in the cilium. Its subcellular location is the flagellum membrane. It carries out the reaction riboflavin(in) = riboflavin(out). Functionally, riboflavin transporter localized at the inner mitochondrial membrane of the spermatozoa midpiece, which is required for male fertility. SLC22A14-mediated riboflavin transport is essential for spermatozoa energy generation and motility: riboflavin is the precursor of FMN and FAD, which are coenzymes of many enzymes in the TCA cycle (the citric acid cycle) in mitochondria. Required for sperm motility and normal sperm flagellar structure. The sequence is that of Solute carrier family 22 member 14 from Homo sapiens (Human).